The following is a 60-amino-acid chain: UPF0337 protein asr4653 (60 aa).

It belongs to the UPF0337 (CsbD) family.

In Nostoc sp. (strain PCC 7120 / SAG 25.82 / UTEX 2576), this protein is UPF0337 protein asr4653.